Reading from the N-terminus, the 370-residue chain is 3-dehydroquinate synthase (370 aa).

NAD(+) is bound by residues 107–111 (GVIGD), 131–132 (TS), Lys-144, and Lys-153. The Zn(2+) site is built by Glu-186, His-249, and His-267.

It belongs to the sugar phosphate cyclases superfamily. Dehydroquinate synthase family. Co(2+) is required as a cofactor. Zn(2+) serves as cofactor. Requires NAD(+) as cofactor.

It localises to the cytoplasm. It catalyses the reaction 7-phospho-2-dehydro-3-deoxy-D-arabino-heptonate = 3-dehydroquinate + phosphate. Its pathway is metabolic intermediate biosynthesis; chorismate biosynthesis; chorismate from D-erythrose 4-phosphate and phosphoenolpyruvate: step 2/7. Functionally, catalyzes the conversion of 3-deoxy-D-arabino-heptulosonate 7-phosphate (DAHP) to dehydroquinate (DHQ). The polypeptide is 3-dehydroquinate synthase (Roseobacter denitrificans (strain ATCC 33942 / OCh 114) (Erythrobacter sp. (strain OCh 114))).